A 510-amino-acid polypeptide reads, in one-letter code: MYAFPTTRIAPRRKQPKCIKPPKCTSKYDIKFKDIAIYILERKMGASRRYFLMELARKKGFRVEPDLSEYVTHVVSEKNSGAEVLEWLQAKKAGSIPNVAILDISWFTDCMGAGQPVEIERKHRLTLQKICVCKSPSPVVPSRVGVSQYACQRKTTLDNKNTLFTDAFEILAENYEFRENERSCLSFRQAASVLKSLTFTIAGMADVDGLPGFGDHIRAVIEDLIEDGESSKVSEVLNDEVYRSLKLFTTIFGVGLRTAEKWHRLGIRTLEEIKSNENLKFSKMQIAGLQHYEDILGGVRKAEADAVAMVVRDAVWTFLPDAVVTLTGGFRRGNKTGHDVDMLITSPIQGKEKELLHKVINLWKKQDLLLCHTIHESTMDEDNLPSKSVNLLDHFQKCFAILKSNQHRGEISSCDGPHDSRERGKRIWKAIRVDLVFCPFEQYAFALLGWTGSRQFERDLRRYASHEKKMMIDNHALYDKTKRVFVKCESEEEIFGHLGLEYIDPVERNA.

The Nuclear localization signal signature appears at 11-17 (PRRKQPK). A BRCT domain is found at 27-124 (KYDIKFKDIA…QPVEIERKHR (98 aa)). An involved in DNA binding region spans residues 254–258 (VGLRT). Residues 329–334 (GFRRGN) and 338–341 (HDVD) contribute to the a 2'-deoxyribonucleoside 5'-triphosphate site. Mg(2+)-binding residues include D339, D341, and D434. A 2'-deoxyribonucleoside 5'-triphosphate is bound at residue 449 to 450 (GW).

This sequence belongs to the DNA polymerase type-X family. It depends on Mg(2+) as a cofactor.

It localises to the nucleus. The catalysed reaction is DNA(n) + a 2'-deoxyribonucleoside 5'-triphosphate = DNA(n+1) + diphosphate. In terms of biological role, template-independent DNA polymerase which catalyzes the random addition of deoxynucleoside 5'-triphosphate to the 3'-end of a DNA initiator. One of the in vivo functions of this enzyme is the addition of nucleotides at the junction (N region) of rearranged Ig heavy chain and T-cell receptor gene segments during the maturation of B- and T-cells. The sequence is that of DNA nucleotidylexotransferase (DNTT) from Ambystoma mexicanum (Axolotl).